The sequence spans 508 residues: Photosystem II CP47 reaction center protein (508 aa).

The next 6 membrane-spanning stretches (helical) occupy residues 21 to 36, 101 to 115, 140 to 156, 203 to 218, 237 to 252, and 457 to 472; these read SVHIMHTALVAGWAGS, IVFSGLCFLAAIWHW, GIHLFLSGVACFGFGAF, IAAGTLGILAGLFHLS, VLSSSIAAVFFAAFVV, and SFALLFFFGHIWHGSR.

This sequence belongs to the PsbB/PsbC family. PsbB subfamily. PSII is composed of 1 copy each of membrane proteins PsbA, PsbB, PsbC, PsbD, PsbE, PsbF, PsbH, PsbI, PsbJ, PsbK, PsbL, PsbM, PsbT, PsbX, PsbY, PsbZ, Psb30/Ycf12, at least 3 peripheral proteins of the oxygen-evolving complex and a large number of cofactors. It forms dimeric complexes. It depends on Binds multiple chlorophylls. PSII binds additional chlorophylls, carotenoids and specific lipids. as a cofactor.

Its subcellular location is the plastid. It localises to the chloroplast thylakoid membrane. Functionally, one of the components of the core complex of photosystem II (PSII). It binds chlorophyll and helps catalyze the primary light-induced photochemical processes of PSII. PSII is a light-driven water:plastoquinone oxidoreductase, using light energy to abstract electrons from H(2)O, generating O(2) and a proton gradient subsequently used for ATP formation. The sequence is that of Photosystem II CP47 reaction center protein from Lepidium virginicum (Virginia pepperweed).